A 557-amino-acid polypeptide reads, in one-letter code: 2-isopropylmalate synthase (557 aa).

Positions 33-307 (PLWLSTDLRD…DPGLDFSDID (275 aa)) constitute a Pyruvate carboxyltransferase domain. 4 residues coordinate Mg(2+): Asp-42, His-246, His-248, and Asn-282. Residues 439–557 (AETPYALKGH…LGQQASIRAA (119 aa)) are regulatory domain.

It belongs to the alpha-IPM synthase/homocitrate synthase family. LeuA type 2 subfamily. As to quaternary structure, homodimer. Mg(2+) serves as cofactor.

The protein resides in the cytoplasm. The catalysed reaction is 3-methyl-2-oxobutanoate + acetyl-CoA + H2O = (2S)-2-isopropylmalate + CoA + H(+). It functions in the pathway amino-acid biosynthesis; L-leucine biosynthesis; L-leucine from 3-methyl-2-oxobutanoate: step 1/4. Its function is as follows. Catalyzes the condensation of the acetyl group of acetyl-CoA with 3-methyl-2-oxobutanoate (2-ketoisovalerate) to form 3-carboxy-3-hydroxy-4-methylpentanoate (2-isopropylmalate). In Azotobacter vinelandii (strain DJ / ATCC BAA-1303), this protein is 2-isopropylmalate synthase.